A 218-amino-acid chain; its full sequence is Telomere repeats-binding bouquet formation protein 2 (218 aa).

A disordered region spans residues 117-143 (HDRMASSDKENIRPTPEHKQELSKSAE).

This sequence belongs to the TERB2 family. In terms of assembly, component of the MAJIN-TERB1-TERB2 complex, composed of MAJIN, TERB1 and TERB2. As to expression, specifically expressed in germline tissues.

It localises to the chromosome. It is found in the telomere. The protein localises to the nucleus inner membrane. In terms of biological role, meiosis-specific telomere-associated protein involved in meiotic telomere attachment to the nucleus inner membrane, a crucial step for homologous pairing and synapsis. Component of the MAJIN-TERB1-TERB2 complex, which promotes telomere cap exchange by mediating attachment of telomeric DNA to the inner nuclear membrane and replacement of the protective cap of telomeric chromosomes: in early meiosis, the MAJIN-TERB1-TERB2 complex associates with telomeric DNA and the shelterin/telosome complex. During prophase, the complex matures and promotes release of the shelterin/telosome complex from telomeric DNA. The chain is Telomere repeats-binding bouquet formation protein 2 from Mus musculus (Mouse).